Reading from the N-terminus, the 215-residue chain is Cytochrome b6 (215 aa).

The chain crosses the membrane as a helical span at residues 32-52 (IFYCLGGITLTCFLVQVATGF). Cys-35 provides a ligand contact to heme c. His-86 and His-100 together coordinate heme b. A run of 3 helical transmembrane segments spans residues 90-110 (ASMMVLMMILHVFRVYLTGGF), 116-136 (LTWVTGVVLAVLTASFGVTGY), and 186-206 (LHTFVLPLLTAVFMLMHFPMI). Heme b is bound by residues His-187 and His-202.

The protein belongs to the cytochrome b family. PetB subfamily. As to quaternary structure, the 4 large subunits of the cytochrome b6-f complex are cytochrome b6, subunit IV (17 kDa polypeptide, PetD), cytochrome f and the Rieske protein, while the 4 small subunits are PetG, PetL, PetM and PetN. The complex functions as a dimer. The cofactor is heme b. Requires heme c as cofactor.

The protein localises to the plastid. It localises to the chloroplast thylakoid membrane. Its function is as follows. Component of the cytochrome b6-f complex, which mediates electron transfer between photosystem II (PSII) and photosystem I (PSI), cyclic electron flow around PSI, and state transitions. The chain is Cytochrome b6 from Nicotiana tomentosiformis (Tobacco).